Reading from the N-terminus, the 207-residue chain is Peptidyl-tRNA hydrolase (207 aa).

A tRNA-binding site is contributed by tyrosine 14. Histidine 19 acts as the Proton acceptor in catalysis. TRNA contacts are provided by tyrosine 64, asparagine 66, and asparagine 112.

Belongs to the PTH family. As to quaternary structure, monomer.

It localises to the cytoplasm. The enzyme catalyses an N-acyl-L-alpha-aminoacyl-tRNA + H2O = an N-acyl-L-amino acid + a tRNA + H(+). Hydrolyzes ribosome-free peptidyl-tRNAs (with 1 or more amino acids incorporated), which drop off the ribosome during protein synthesis, or as a result of ribosome stalling. Its function is as follows. Catalyzes the release of premature peptidyl moieties from peptidyl-tRNA molecules trapped in stalled 50S ribosomal subunits, and thus maintains levels of free tRNAs and 50S ribosomes. The polypeptide is Peptidyl-tRNA hydrolase (Rhodopseudomonas palustris (strain BisB5)).